A 1372-amino-acid chain; its full sequence is DNA-directed RNA polymerase subunit beta' (1372 aa).

Zn(2+) is bound by residues C69, C71, C84, and C87. Residues D460, D462, and D464 each contribute to the Mg(2+) site. Zn(2+) is bound by residues C808, C882, C889, and C892.

Belongs to the RNA polymerase beta' chain family. In terms of assembly, the RNAP catalytic core consists of 2 alpha, 1 beta, 1 beta' and 1 omega subunit. When a sigma factor is associated with the core the holoenzyme is formed, which can initiate transcription. Requires Mg(2+) as cofactor. It depends on Zn(2+) as a cofactor.

It catalyses the reaction RNA(n) + a ribonucleoside 5'-triphosphate = RNA(n+1) + diphosphate. Functionally, DNA-dependent RNA polymerase catalyzes the transcription of DNA into RNA using the four ribonucleoside triphosphates as substrates. The sequence is that of DNA-directed RNA polymerase subunit beta' from Rickettsia bellii (strain OSU 85-389).